The sequence spans 437 residues: Sodium/bile acid cotransporter 4 (437 aa).

The Extracellular segment spans residues 1–103 (MDGNDNVTLL…LPFWDTPLNH (103 aa)). Residues Asn-6, Asn-18, and Asn-24 are each glycosylated (N-linked (GlcNAc...) asparagine). A disordered region spans residues 37-82 (APASSAGPGPGLSLGPGPSFGFSPGPTPTPEPTTSGLAGGAASHGP). Residues 51–60 (GPGPSFGFSP) show a composition bias toward low complexity. Residues 104–124 (GLNVFVGAALCITMLGLGCTV) form a helical membrane-spanning segment. The Cytoplasmic segment spans residues 125–140 (DVNHFGAHVRRPVGAL). Residues 141-161 (LAALCQFGLLPLLAFLLALAF) form a helical membrane-spanning segment. Topologically, residues 162 to 197 (KLDEVAAVAVLLCGCCPGGNLSNLMSLLVDGDMNLS) are extracellular. N-linked (GlcNAc...) asparagine glycans are attached at residues Asn-181 and Asn-195. The chain crosses the membrane as a helical span at residues 198 to 218 (IIMTISSTLLALVLMPLCLWI). The Cytoplasmic segment spans residues 219-233 (YSWAWINTPIVQLLP). The helical transmembrane segment at 234–254 (LGTVTLTLCSTLIPIGLGVFI) threads the bilayer. At 255–267 (RYKYSRVADYIVK) the chain is on the extracellular side. The chain crosses the membrane as a helical span at residues 268–288 (VSLWSLLVTLVVLFIMTGTML). Residues 289 to 291 (GPE) are Cytoplasmic-facing. A helical membrane pass occupies residues 292–312 (LLASIPAAVYVIAIFMPLAGY). Residues 313 to 360 (ASGYGLATLFHLPPNCKRTVCLETGSQNVQLCTAILKLAFPPQFIGSM) lie on the Extracellular side of the membrane. Residues 361–381 (YMFPLLYALFQSAEAGIFVLI) traverse the membrane as a helical segment. The Cytoplasmic segment spans residues 382-437 (YKMYGSEMLHKRDPLDEDEDTDISYKKLKEEEMADTSYGTVKAENIIMMETAQTSL).

It belongs to the bile acid:sodium symporter (BASS) (TC 2.A.28) family. Activated following N-terminal proteolytic cleavage by thrombin and/or proteases. In terms of tissue distribution, highly expressed in brain and small intestine, and moderately expressed in colon, heart, prostate, and testis. Very low levels were detected in kidney, liver, ovary, placenta, spleen, and thymus.

It localises to the cell membrane. In terms of biological role, transporter for bile acids. The chain is Sodium/bile acid cotransporter 4 (SLC10A4) from Homo sapiens (Human).